A 447-amino-acid chain; its full sequence is Dihydroorotase (447 aa).

2 residues coordinate Zn(2+): His84 and His86. Residues 86–88 (HLR) and Asn118 each bind substrate. Zn(2+) is bound by residues Asp174, His201, and His255. Asn301 serves as a coordination point for substrate. Zn(2+) is bound at residue Asp328. Residue Asp328 is part of the active site. Residues His332 and 346–347 (FG) contribute to the substrate site.

It belongs to the metallo-dependent hydrolases superfamily. DHOase family. Class I DHOase subfamily. Requires Zn(2+) as cofactor.

It carries out the reaction (S)-dihydroorotate + H2O = N-carbamoyl-L-aspartate + H(+). The protein operates within pyrimidine metabolism; UMP biosynthesis via de novo pathway; (S)-dihydroorotate from bicarbonate: step 3/3. In terms of biological role, catalyzes the reversible cyclization of carbamoyl aspartate to dihydroorotate. This chain is Dihydroorotase, found in Anaplasma phagocytophilum (strain HZ).